A 79-amino-acid chain; its full sequence is Cell division protein ZapB (79 aa).

Residues 3–79 (LEVFEKLEAK…QALLGRMEEV (77 aa)) are a coiled coil.

It belongs to the ZapB family. In terms of assembly, homodimer. The ends of the coiled-coil dimer bind to each other, forming polymers. Interacts with FtsZ.

The protein resides in the cytoplasm. In terms of biological role, non-essential, abundant cell division factor that is required for proper Z-ring formation. It is recruited early to the divisome by direct interaction with FtsZ, stimulating Z-ring assembly and thereby promoting cell division earlier in the cell cycle. Its recruitment to the Z-ring requires functional FtsA or ZipA. The sequence is that of Cell division protein ZapB from Salmonella typhi.